Consider the following 378-residue polypeptide: Phosphoserine aminotransferase (378 aa).

Arginine 53 is an L-glutamate binding site. Pyridoxal 5'-phosphate-binding residues include tryptophan 117, threonine 167, aspartate 190, and glutamine 213. The residue at position 214 (lysine 214) is an N6-(pyridoxal phosphate)lysine. 255–256 (NT) lines the pyridoxal 5'-phosphate pocket.

It belongs to the class-V pyridoxal-phosphate-dependent aminotransferase family. SerC subfamily. Homodimer. Pyridoxal 5'-phosphate is required as a cofactor.

It is found in the cytoplasm. The catalysed reaction is O-phospho-L-serine + 2-oxoglutarate = 3-phosphooxypyruvate + L-glutamate. It catalyses the reaction 4-(phosphooxy)-L-threonine + 2-oxoglutarate = (R)-3-hydroxy-2-oxo-4-phosphooxybutanoate + L-glutamate. It functions in the pathway amino-acid biosynthesis; L-serine biosynthesis; L-serine from 3-phospho-D-glycerate: step 2/3. The protein operates within cofactor biosynthesis; pyridoxine 5'-phosphate biosynthesis; pyridoxine 5'-phosphate from D-erythrose 4-phosphate: step 3/5. Its function is as follows. Catalyzes the reversible conversion of 3-phosphohydroxypyruvate to phosphoserine and of 3-hydroxy-2-oxo-4-phosphonooxybutanoate to phosphohydroxythreonine. This chain is Phosphoserine aminotransferase, found in Ralstonia nicotianae (strain ATCC BAA-1114 / GMI1000) (Ralstonia solanacearum).